The sequence spans 171 residues: Iron-sulfur cluster assembly protein 3 (171 aa).

The N-terminal 49 residues, 1–49, are a transit peptide targeting the mitochondrion; sequence MLRQTTKRAFLGLASQNPTPFPVVSRLYHPNVIDHYDNPRNVGSFDKND.

It belongs to the NifU family. In terms of assembly, component of the core Fe-S cluster (ISC) assembly machinery. Requires [2Fe-2S] cluster as cofactor. In terms of tissue distribution, mostly expressed in flowers and pollen, and, to a lower extent, in leaves and roots.

Its subcellular location is the mitochondrion matrix. It participates in cofactor biosynthesis; iron-sulfur cluster biosynthesis. In terms of biological role, scaffold protein for the de novo synthesis of iron-sulfur (Fe-S) clusters within mitochondria, which is required for maturation of both mitochondrial and cytoplasmic [2Fe-2S] and [4Fe-4S] proteins. First, a [2Fe-2S] cluster is transiently assembled on the scaffold protein ISCU (ISU1, ISU2 or ISU3). In a second step, the cluster is released from ISCU, transferred to a glutaredoxin, followed by the formation of mitochondrial [2Fe-2S] proteins, the synthesis of [4Fe-4S] clusters and their target-specific insertion into the recipient apoproteins. Cluster assembly on ISCU depends on the function of the cysteine desulfurase complex NFS1-ISD11, which serves as the sulfur donor for cluster synthesis, the iron-binding protein frataxin as the putative iron donor, and the electron transfer chain comprised of ferredoxin reductase and ferredoxin, which receive their electrons from NADH. The polypeptide is Iron-sulfur cluster assembly protein 3 (ISU3) (Arabidopsis thaliana (Mouse-ear cress)).